Reading from the N-terminus, the 30-residue chain is Hemocyanin subunit 2 (30 aa).

This sequence belongs to the tyrosinase family. Hemocyanin subfamily. As to expression, hemolymph.

It localises to the secreted. It is found in the extracellular space. In terms of biological role, hemocyanins are copper-containing oxygen carriers occurring freely dissolved in the hemolymph of many mollusks and arthropods. The sequence is that of Hemocyanin subunit 2 from Homarus americanus (American lobster).